The chain runs to 140 residues: 3-hydroxyacyl-[acyl-carrier-protein] dehydratase FabZ (140 aa).

Histidine 48 is a catalytic residue.

This sequence belongs to the thioester dehydratase family. FabZ subfamily.

The protein localises to the cytoplasm. The catalysed reaction is a (3R)-hydroxyacyl-[ACP] = a (2E)-enoyl-[ACP] + H2O. Its function is as follows. Involved in unsaturated fatty acids biosynthesis. Catalyzes the dehydration of short chain beta-hydroxyacyl-ACPs and long chain saturated and unsaturated beta-hydroxyacyl-ACPs. The polypeptide is 3-hydroxyacyl-[acyl-carrier-protein] dehydratase FabZ (Caldicellulosiruptor saccharolyticus (strain ATCC 43494 / DSM 8903 / Tp8T 6331)).